A 626-amino-acid polypeptide reads, in one-letter code: Two-component response regulator ORR24 (626 aa).

Residues 1-22 (MTVEERQGRVGGHGVSGGGGGR) form a disordered region. A compositionally biased stretch (gly residues) spans 9-22 (RVGGHGVSGGGGGR). A Response regulatory domain is found at 30-145 (RVLAVDDDPT…QLRTIWQHVI (116 aa)). 4-aspartylphosphate is present on Asp-81. The span at 151 to 162 (DAKNRGNDDDAG) shows a compositional bias: basic and acidic residues. Disordered regions lie at residues 151–215 (DAKN…KKPR) and 402–440 (PLES…RTTN). Residues 191 to 202 (NGDDGDDSDENS) show a composition bias toward acidic residues. The myb-like GARP DNA-binding region spans 210 to 269 (TQKKPRVVWSVELHRKFVAAVNQLGIEKAVPKKILDLMNVENITRENVASHLQKYRLYLK). The segment covering 402-421 (PLESSNQQHLSRVHSSSADP) has biased composition (polar residues).

Belongs to the ARR family. Type-B subfamily. Post-translationally, two-component system major event consists of a His-to-Asp phosphorelay between a sensor histidine kinase (HK) and a response regulator (RR). In plants, the His-to-Asp phosphorelay involves an additional intermediate named Histidine-containing phosphotransfer protein (HPt). This multistep phosphorelay consists of a His-Asp-His-Asp sequential transfer of a phosphate group between first a His and an Asp of the HK protein, followed by the transfer to a conserved His of the HPt protein and finally the transfer to an Asp in the receiver domain of the RR protein.

Its subcellular location is the nucleus. Its function is as follows. Transcriptional activator that binds specific DNA sequence. Functions as a response regulator involved in His-to-Asp phosphorelay signal transduction system. Phosphorylation of the Asp residue in the receiver domain activates the ability of the protein to promote the transcription of target genes. May directly activate some type-A response regulators in response to cytokinins. This chain is Two-component response regulator ORR24, found in Oryza sativa subsp. japonica (Rice).